Here is a 942-residue protein sequence, read N- to C-terminus: Isoleucine--tRNA ligase (942 aa).

The 'HIGH' region motif lies at 58-68; that stretch reads PYANGDIHIGH. An L-isoleucyl-5'-AMP-binding site is contributed by E566. The 'KMSKS' region signature appears at 607-611; the sequence is KMSKS. K610 provides a ligand contact to ATP. 4 residues coordinate Zn(2+): C905, C908, C925, and C928.

This sequence belongs to the class-I aminoacyl-tRNA synthetase family. IleS type 1 subfamily. Monomer. Zn(2+) is required as a cofactor.

It localises to the cytoplasm. The enzyme catalyses tRNA(Ile) + L-isoleucine + ATP = L-isoleucyl-tRNA(Ile) + AMP + diphosphate. In terms of biological role, catalyzes the attachment of isoleucine to tRNA(Ile). As IleRS can inadvertently accommodate and process structurally similar amino acids such as valine, to avoid such errors it has two additional distinct tRNA(Ile)-dependent editing activities. One activity is designated as 'pretransfer' editing and involves the hydrolysis of activated Val-AMP. The other activity is designated 'posttransfer' editing and involves deacylation of mischarged Val-tRNA(Ile). This chain is Isoleucine--tRNA ligase, found in Pseudoalteromonas atlantica (strain T6c / ATCC BAA-1087).